The chain runs to 502 residues: Cyclin-dependent kinase 19 (502 aa).

At M1 the chain carries N-acetylmethionine. Positions E21–F335 constitute a Protein kinase domain. ATP-binding positions include V27 to V35 and K52. D151 serves as the catalytic Proton acceptor. The tract at residues L359–Y502 is disordered. Low complexity predominate over residues N371–P392. Gly residues predominate over residues T408–A421. Over residues Q424–P435 the composition is skewed to polar residues. At S449 the chain carries Phosphoserine. Polar residues predominate over residues Y458–Y467. Residues Q468–S496 are compositionally biased toward low complexity.

It belongs to the protein kinase superfamily. CMGC Ser/Thr protein kinase family. CDC2/CDKX subfamily.

It localises to the cytoplasm. It is found in the perinuclear region. The protein localises to the nucleus. The catalysed reaction is L-seryl-[protein] + ATP = O-phospho-L-seryl-[protein] + ADP + H(+). The enzyme catalyses L-threonyl-[protein] + ATP = O-phospho-L-threonyl-[protein] + ADP + H(+). The polypeptide is Cyclin-dependent kinase 19 (CDK19) (Homo sapiens (Human)).